The following is a 404-amino-acid chain: Probable tRNA sulfurtransferase (404 aa).

The region spanning 60 to 165 (QPVAESLKQI…EEAAYISYET (106 aa)) is the THUMP domain. ATP is bound by residues 183–184 (ML), 208–209 (HF), Arg265, Gly287, and Gln296.

The protein belongs to the ThiI family.

It localises to the cytoplasm. The catalysed reaction is [ThiI sulfur-carrier protein]-S-sulfanyl-L-cysteine + a uridine in tRNA + 2 reduced [2Fe-2S]-[ferredoxin] + ATP + H(+) = [ThiI sulfur-carrier protein]-L-cysteine + a 4-thiouridine in tRNA + 2 oxidized [2Fe-2S]-[ferredoxin] + AMP + diphosphate. It carries out the reaction [ThiS sulfur-carrier protein]-C-terminal Gly-Gly-AMP + S-sulfanyl-L-cysteinyl-[cysteine desulfurase] + AH2 = [ThiS sulfur-carrier protein]-C-terminal-Gly-aminoethanethioate + L-cysteinyl-[cysteine desulfurase] + A + AMP + 2 H(+). It participates in cofactor biosynthesis; thiamine diphosphate biosynthesis. Its function is as follows. Catalyzes the ATP-dependent transfer of a sulfur to tRNA to produce 4-thiouridine in position 8 of tRNAs, which functions as a near-UV photosensor. Also catalyzes the transfer of sulfur to the sulfur carrier protein ThiS, forming ThiS-thiocarboxylate. This is a step in the synthesis of thiazole, in the thiamine biosynthesis pathway. The sulfur is donated as persulfide by IscS. This chain is Probable tRNA sulfurtransferase, found in Streptococcus sanguinis (strain SK36).